A 718-amino-acid chain; its full sequence is MTSYELSRELGGHKQDVRGVCSISNELIGSASRDGTYSVWEQINGEWTPHFYENHEGFVNCVCYVPAIDKNSRGYIFSGGQDKCGILQEVGTNSPSYYLFGHESNICSASALNSETIITGSWDSTARVWALGQCKYVLKGHQSSVWAVLALGEDIFITGSADKLIKIWNGEKLVKSILAHNDCVRSLCQIPGGFASCSNDGVIKLWTSDGEFLYELHGHTSFVYSLTYIHNQQLIASCGEDRTIRIWKGKECLQCITLPTTSVWSVSSLPNGDLVCGSSDGFVRIFTVDKVRVAPTEVLKNFEERVSQFAISSQEVGDIKKGSLPGLEILSKPGKADGDVVMVRVNNDVEAYQWSQKENEWKKIGQVVDAVGNNRKQLFEGKEYDYVFDVDVADGQAPLKLPYNATENPYQAANRFLELNQLPLSYTDEVVKFIEKNTQGHSLESKKEPNLESQSSNKIKTTIFPVSQLLFSNANVPAMCQRLRSLNNTKSNPLPAKSIDSLERALSSKKITDTEKNELLETCLSILDSWSLAERFPALDALRLLAINSSSDLAPIFLEVFSRVVKSVPSSGNFESINVMLALRGLSNVVPNITDAEGVSKLMDCLTSTVPQASSAKDFKIAFATLAMNLSILLIQLNLENTGIELLSILFSFLDDPSPDNEAFYRALMALGTLCTVPDIALAASQIYHAQSIVHGIAERFSQEMRFVDAEKQILSLF.

WD repeat units lie at residues 12-50 (GHKQ…WTPH), 54-98 (NHEG…PSYY), 101-139 (GHES…YVLK), 140-178 (GHQS…KSIL), 180-217 (HNDC…YELH), 218-257 (GHTS…QCIT), and 259-296 (PTTS…VAPT). The 96-residue stretch at 353 to 448 (QWSQKENEWK…QGHSLESKKE (96 aa)) folds into the PFU domain. The 256-residue stretch at 462-717 (TIFPVSQLLF…VDAEKQILSL (256 aa)) folds into the PUL domain.

In terms of assembly, interacts with cdc48.

The protein localises to the nucleus. The protein resides in the cytoplasm. In terms of biological role, acts as a negative regulator of vacuole-dependent ubiquitin degradation. This chain is Ubiquitin homeostasis protein lub1 (lub1), found in Schizosaccharomyces pombe (strain 972 / ATCC 24843) (Fission yeast).